The primary structure comprises 276 residues: MRMLDGRSMAAEIGRYVVDEAERLAAAGVTPTLAVVLPTADPAAYSYAEIIERTAGKVGVHCVLHEPKGEPAAILDTIDTVAADPTVHGIIVQTPLPGGLTSREVGEHIPTAKDVDGMNPSSLGRLALGLPSFAPATAAAVVEILTRARIPMSGARVCVIGRGPVVGKPVSLLLLAEDATVTICHSRTKGLVSIAHEADIIVSATGHPRLVGAGFVRPGAAVIDVGTVVTETGQVGDVDAAAVSSVAGALTPVPGGVGPVTTMLLLRNTIRAARAA.

NADP(+) is bound by residues 161-163, serine 186, and threonine 227; that span reads GRG.

The protein belongs to the tetrahydrofolate dehydrogenase/cyclohydrolase family. In terms of assembly, homodimer.

The enzyme catalyses (6R)-5,10-methylene-5,6,7,8-tetrahydrofolate + NADP(+) = (6R)-5,10-methenyltetrahydrofolate + NADPH. It catalyses the reaction (6R)-5,10-methenyltetrahydrofolate + H2O = (6R)-10-formyltetrahydrofolate + H(+). The protein operates within one-carbon metabolism; tetrahydrofolate interconversion. In terms of biological role, catalyzes the oxidation of 5,10-methylenetetrahydrofolate to 5,10-methenyltetrahydrofolate and then the hydrolysis of 5,10-methenyltetrahydrofolate to 10-formyltetrahydrofolate. The chain is Bifunctional protein FolD 1 from Frankia casuarinae (strain DSM 45818 / CECT 9043 / HFP020203 / CcI3).